A 105-amino-acid chain; its full sequence is Met repressor (105 aa).

This sequence belongs to the MetJ family. In terms of assembly, homodimer.

The protein localises to the cytoplasm. Functionally, this regulatory protein, when combined with SAM (S-adenosylmethionine) represses the expression of the methionine regulon and of enzymes involved in SAM synthesis. This is Met repressor from Haemophilus influenzae (strain PittEE).